The primary structure comprises 229 residues: Vacuolar protein sorting-associated protein 24 homolog 1 (229 aa).

Positions 15 to 60 (KQLLRDWQRKLRQECRNIERQIRDIQKEERNVQKAIKEAAKRNDMV) form a coiled coil. The disordered stretch occupies residues 193–215 (VPAQKASTSREEEAVAEGVDDEE). A compositionally biased stretch (acidic residues) spans 206–215 (AVAEGVDDEE).

Belongs to the SNF7 family. In terms of assembly, component of the endosomal sorting required for transport complex III (ESCRT-III), composed at least of VPS2, VPS20, VPS24 and VPS32. Interacts with SKD1.

The protein resides in the endosome. Functionally, component of the ESCRT-III complex, which is required for multivesicular bodies (MVBs) formation and sorting of endosomal cargo proteins into MVBs. The ESCRT-III complex is probably involved in the concentration of MVB cargo. This chain is Vacuolar protein sorting-associated protein 24 homolog 1 (VPS24-1), found in Arabidopsis thaliana (Mouse-ear cress).